The primary structure comprises 268 residues: Methionine aminopeptidase (268 aa).

A substrate-binding site is contributed by H79. The a divalent metal cation site is built by D97, D108, and H172. Residue H179 participates in substrate binding. Residues E205 and E236 each contribute to the a divalent metal cation site.

It belongs to the peptidase M24A family. Methionine aminopeptidase type 1 subfamily. In terms of assembly, monomer. Requires Co(2+) as cofactor. Zn(2+) is required as a cofactor. It depends on Mn(2+) as a cofactor. Fe(2+) serves as cofactor.

The enzyme catalyses Release of N-terminal amino acids, preferentially methionine, from peptides and arylamides.. Its function is as follows. Removes the N-terminal methionine from nascent proteins. The N-terminal methionine is often cleaved when the second residue in the primary sequence is small and uncharged (Met-Ala-, Cys, Gly, Pro, Ser, Thr, or Val). Requires deformylation of the N(alpha)-formylated initiator methionine before it can be hydrolyzed. This Haemophilus influenzae (strain ATCC 51907 / DSM 11121 / KW20 / Rd) protein is Methionine aminopeptidase.